Consider the following 269-residue polypeptide: Cytochrome c oxidase subunit 3 (269 aa).

7 helical membrane-spanning segments follow: residues G7–S29, I51–A71, G90–L110, V127–A147, T167–L187, F205–I225, and I247–W267.

This sequence belongs to the cytochrome c oxidase subunit 3 family. As to quaternary structure, component of the cytochrome c oxidase (complex IV, CIV), a multisubunit enzyme composed of a catalytic core of 3 subunits and several supernumerary subunits. The complex exists as a monomer or a dimer and forms supercomplexes (SCs) in the inner mitochondrial membrane with ubiquinol-cytochrome c oxidoreductase (cytochrome b-c1 complex, complex III, CIII).

The protein resides in the mitochondrion inner membrane. The catalysed reaction is 4 Fe(II)-[cytochrome c] + O2 + 8 H(+)(in) = 4 Fe(III)-[cytochrome c] + 2 H2O + 4 H(+)(out). In terms of biological role, component of the cytochrome c oxidase, the last enzyme in the mitochondrial electron transport chain which drives oxidative phosphorylation. The respiratory chain contains 3 multisubunit complexes succinate dehydrogenase (complex II, CII), ubiquinol-cytochrome c oxidoreductase (cytochrome b-c1 complex, complex III, CIII) and cytochrome c oxidase (complex IV, CIV), that cooperate to transfer electrons derived from NADH and succinate to molecular oxygen, creating an electrochemical gradient over the inner membrane that drives transmembrane transport and the ATP synthase. Cytochrome c oxidase is the component of the respiratory chain that catalyzes the reduction of oxygen to water. Electrons originating from reduced cytochrome c in the intermembrane space (IMS) are transferred via the dinuclear copper A center (CU(A)) of subunit 2 and heme A of subunit 1 to the active site in subunit 1, a binuclear center (BNC) formed by heme A3 and copper B (CU(B)). The BNC reduces molecular oxygen to 2 water molecules using 4 electrons from cytochrome c in the IMS and 4 protons from the mitochondrial matrix. This chain is Cytochrome c oxidase subunit 3 (COX3), found in Candida parapsilosis (Yeast).